The chain runs to 626 residues: Nuclear receptor subfamily 4 group A member 3 (626 aa).

Residues 1–108 (MPCVQAQYSP…HHHHHHHHHH (108 aa)) are activation function (AF)-1 domain. The segment at 1–138 (MPCVQAQYSP…PSTSMYFKQS (138 aa)) is required for DNA-PK heterotrimer. Positions 1-291 (MPCVQAQYSP…SRSSSSGEGT (291 aa)) are interaction with NCOA1, NCOA2, NCOA3 and KAT2B. Disordered regions lie at residues 92–152 (PSYH…PPQA), 192–211 (HFKPSPPHPPAPSPAGGHHL), and 265–284 (PTASSLLGESPSLPSPPSRS). Over residues 93–110 (SYHHHHHHHHHHHHHHQQ) the composition is skewed to basic residues. 2 stretches are compositionally biased toward pro residues: residues 140–149 (PSTPTTPAFP) and 195–204 (PSPPHPPAPS). Positions 268-284 (SSLLGESPSLPSPPSRS) are enriched in low complexity. The nuclear receptor DNA-binding region spans 289–364 (EGTCAVCGDN…VGMVKEVVRT (76 aa)). 2 NR C4-type zinc fingers span residues 292 to 312 (CAVCGDNAACQHYGVRTCEGC) and 328 to 352 (CLANKNCPVDKRRRNRCQYCRFQKC). The tract at residues 364–394 (TDSLKGRRGRLPSKPKSPLQQEPSQPSPPSP) is disordered. The span at 377–387 (KPKSPLQQEPS) shows a compositional bias: low complexity. The interaction with KAT2B stretch occupies residues 379-626 (KSPLQQEPSQ…DKLFLDTLPF (248 aa)). The region spanning 394–623 (PPICMMNALV…SIIDKLFLDT (230 aa)) is the NR LBD domain.

This sequence belongs to the nuclear hormone receptor family. NR4 subfamily. Interacts with SIX3 (via homeobox); differentially regulates the transcriptional activities of NR4A3. Interacts with the constituents of DNA-PK heterotrimer PRKDC, XRCC6 and XRCC5; phosphorylates and prevents NR4A3 ubiquitinylation and degradation. Interacts with NCOA2; potentiates the activity of the NR4A3. Interacts with NCOA1, NCOA3, MED1 and KAT2B. Interacts with EP300 and NCOA2; mediates the recruitment of MED1 in the coactivator complex. Interacts with NR3C1 (via nuclear receptor DNA-binding domain); the interactions represses transcription activity of NR4A3 on the POMC promoter Nur response element (NurRE). Interacts with TRIM28; the interactions potentiates NR4A3 activity on NurRE promoter. Binds DNA as a monomer and homodimer. Interacts with PARP1; activates PARP1 by improving acetylation of PARP1 and suppressing the interaction between PARP1 and SIRT1. In terms of processing, phosphorylated by PRKDC. In terms of tissue distribution, isoform alpha is highly expressed in skeletal muscle. Isoform beta is highly expressed in skeletal muscle and low expressed in fetal brain and placenta.

The protein localises to the nucleus. Transcriptional activator that binds to regulatory elements in promoter regions in a cell- and response element (target)-specific manner. Induces gene expression by binding as monomers to the NR4A1 response element (NBRE) 5'-AAAAGGTCA-3' site and as homodimers to the Nur response element (NurRE) site in the promoter of their regulated target genes. Plays a role in the regulation of proliferation, survival and differentiation of many different cell types and also in metabolism and inflammation. Mediates proliferation of vascular smooth muscle, myeloid progenitor cell and type B pancreatic cells; promotes mitogen-induced vascular smooth muscle cell proliferation through transactivation of SKP2 promoter by binding a NBRE site. Upon PDGF stimulation, stimulates vascular smooth muscle cell proliferation by regulating CCND1 and CCND2 expression. In islets, induces type B pancreatic cell proliferation through up-regulation of genes that activate cell cycle, as well as genes that cause degradation of the CDKN1A. Negatively regulates myeloid progenitor cell proliferation by repressing RUNX1 in a NBRE site-independent manner. During inner ear, plays a role as a key mediator of the proliferative growth phase of semicircular canal development. Also mediates survival of neuron and smooth muscle cells; mediates CREB-induced neuronal survival, and during hippocampus development, plays a critical role in pyramidal cell survival and axonal guidance. Is required for S phase entry of the cell cycle and survival of smooth muscle cells by inducing CCND1, resulting in RB1 phosphorylation. Binds to NBRE motif in CCND1 promoter, resulting in the activation of the promoter and CCND1 transcription. Also plays a role in inflammation; upon TNF stimulation, mediates monocyte adhesion by inducing the expression of VCAM1 and ICAM1 by binding to the NBRE consensus site. In mast cells activated by Fc-epsilon receptor cross-linking, promotes the synthesis and release of cytokines but impairs events leading to degranulation. Also plays a role in metabolism; by modulating feeding behavior; and by playing a role in energy balance by inhibiting the glucocorticoid-induced orexigenic neuropeptides AGRP expression, at least in part by forming a complex with activated NR3C1 on the AGRP- glucocorticoid response element (GRE), and thus weakening the DNA binding activity of NR3C1. Upon catecholamines stimulation, regulates gene expression that controls oxidative metabolism in skeletal muscle. Plays a role in glucose transport by regulating translocation of the SLC2A4 glucose transporter to the cell surface. Finally, during gastrulation plays a crucial role in the formation of anterior mesoderm by controlling cell migration. Inhibits adipogenesis. Also participates in cardiac hypertrophy by activating PARP1. The protein is Nuclear receptor subfamily 4 group A member 3 (NR4A3) of Homo sapiens (Human).